We begin with the raw amino-acid sequence, 337 residues long: Glyceraldehyde-3-phosphate dehydrogenase (337 aa).

NAD(+) is bound by residues 12-13 (RI), aspartate 34, and lysine 79. D-glyceraldehyde 3-phosphate-binding positions include 150-152 (SCT), threonine 181, 210-211 (TG), and arginine 233. Cysteine 151 (nucleophile) is an active-site residue. Position 315 (asparagine 315) interacts with NAD(+).

It belongs to the glyceraldehyde-3-phosphate dehydrogenase family. In terms of assembly, homotetramer. As to expression, expressed in all tissues examined.

It is found in the cytoplasm. The catalysed reaction is D-glyceraldehyde 3-phosphate + phosphate + NAD(+) = (2R)-3-phospho-glyceroyl phosphate + NADH + H(+). It participates in carbohydrate degradation; glycolysis; pyruvate from D-glyceraldehyde 3-phosphate: step 1/5. The sequence is that of Glyceraldehyde-3-phosphate dehydrogenase (gpd) from Lentinula edodes (Shiitake mushroom).